Reading from the N-terminus, the 398-residue chain is Arginine biosynthesis bifunctional protein ArgJ (398 aa).

6 residues coordinate substrate: T148, K174, T185, E271, N393, and T398. T185 (nucleophile) is an active-site residue.

It belongs to the ArgJ family. Heterotetramer of two alpha and two beta chains.

It localises to the cytoplasm. It catalyses the reaction N(2)-acetyl-L-ornithine + L-glutamate = N-acetyl-L-glutamate + L-ornithine. The enzyme catalyses L-glutamate + acetyl-CoA = N-acetyl-L-glutamate + CoA + H(+). The protein operates within amino-acid biosynthesis; L-arginine biosynthesis; L-ornithine and N-acetyl-L-glutamate from L-glutamate and N(2)-acetyl-L-ornithine (cyclic): step 1/1. It functions in the pathway amino-acid biosynthesis; L-arginine biosynthesis; N(2)-acetyl-L-ornithine from L-glutamate: step 1/4. Catalyzes two activities which are involved in the cyclic version of arginine biosynthesis: the synthesis of N-acetylglutamate from glutamate and acetyl-CoA as the acetyl donor, and of ornithine by transacetylation between N(2)-acetylornithine and glutamate. This Listeria monocytogenes serotype 4b (strain F2365) protein is Arginine biosynthesis bifunctional protein ArgJ.